A 383-amino-acid chain; its full sequence is Opsin Rh4 (383 aa).

Residues 1 to 57 (MDIAGSLCNASEGPVLRPEARVSGNGDLQFLGWNVPPDQIQHIPEHWLTQLEPPASM) are Extracellular-facing. Residue N9 is glycosylated (N-linked (GlcNAc...) asparagine). The helical transmembrane segment at 58–82 (HYMLGVFYIFLFCASTVGNGMVIWI) threads the bilayer. The Cytoplasmic segment spans residues 83–94 (FSTSKALRTPSN). The helical transmembrane segment at 95-117 (MFVLNLAVFDFIMCLKAPIFIYN) threads the bilayer. Over 118–133 (SFHRGFALGNTGCQIF) the chain is Extracellular. The cysteines at positions 130 and 207 are disulfide-linked. Residues 134 to 153 (AAIGSYSGIGAGMTNAAIGY) traverse the membrane as a helical segment. At 154-171 (DRLNVITKPMNRNMTFTK) the chain is on the cytoplasmic side. A helical membrane pass occupies residues 172–196 (AIIMNVIIWLYCTPWVVLPLTQFWD). The Extracellular segment spans residues 197-220 (RFVPEGYLTSCTFDYLTDNFDTRL). The helical transmembrane segment at 221 to 248 (FVGTIFFFSFVCPTLMIIYYYSQIVGHV) threads the bilayer. Over 249–284 (FSHEKALREQAKKMNVESLRSNVDKSKDTAEIRIAK) the chain is Cytoplasmic. The helical transmembrane segment at 285–308 (AAITICFLFFVSWTPYGVMSLIGA) threads the bilayer. Residues 309–316 (FGDKSLLT) are Extracellular-facing. The helical transmembrane segment at 317–341 (PGATMIPACTCKLVACIDPFVYAIS) threads the bilayer. The residue at position 328 (K328) is an N6-(retinylidene)lysine. The Cytoplasmic segment spans residues 342 to 383 (HPRYRMELQKRCPWLAIDEKAPESSSAASTTTTQEQQQTTAA). Positions 361-383 (KAPESSSAASTTTTQEQQQTTAA) are disordered. Low complexity predominate over residues 364-383 (ESSSAASTTTTQEQQQTTAA).

It belongs to the G-protein coupled receptor 1 family. Opsin subfamily. Post-translationally, phosphorylated on some or all of the serine and threonine residues present in the C-terminal region.

The protein resides in the membrane. In terms of biological role, visual pigments are the light-absorbing molecules that mediate vision. They consist of an apoprotein, opsin, covalently linked to cis-retinal. This chain is Opsin Rh4 (Rh4), found in Drosophila virilis (Fruit fly).